A 326-amino-acid chain; its full sequence is tRNA-modifying protein YgfZ (326 aa).

Residues tryptophan 27 and tryptophan 189 each coordinate folate.

The protein belongs to the tRNA-modifying YgfZ family.

It is found in the cytoplasm. Its function is as follows. Folate-binding protein involved in regulating the level of ATP-DnaA and in the modification of some tRNAs. It is probably a key factor in regulatory networks that act via tRNA modification, such as initiation of chromosomal replication. This Escherichia fergusonii (strain ATCC 35469 / DSM 13698 / CCUG 18766 / IAM 14443 / JCM 21226 / LMG 7866 / NBRC 102419 / NCTC 12128 / CDC 0568-73) protein is tRNA-modifying protein YgfZ.